A 213-amino-acid chain; its full sequence is von Hippel-Lindau disease tumor suppressor (213 aa).

Positions 1-65 (MPRRAENWDE…AGRPRPVLRS (65 aa)) are disordered. Over residues 8–54 (WDEAEVGAEEAGVEEYGPEEDGGEESGAEESGPEESGPEELGAEEEM) the composition is skewed to acidic residues. A run of 8 repeats spans residues 14 to 18 (GAEEA), 19 to 23 (GVEEY), 24 to 28 (GPEED), 29 to 33 (GGEES), 34 to 38 (GAEES), 39 to 43 (GPEES), 44 to 48 (GPEEL), and 49 to 53 (GAEEE). The 8 X 5 AA tandem repeats of G-[PAVG]-E-E-[DAYSLE] stretch occupies residues 14–53 (GAEEAGVEEYGPEEDGGEESGAEESGPEESGPEELGAEEE). Residues 100–155 (TLPPGTGRRIHSYRGHLWLFRDAGTHDGLLVNQTELFVPSLNVDGQPIFANITLPV) are involved in binding to CCT complex. Residues 157-166 (TLKERCLQVV) are interaction with Elongin BC complex.

This sequence belongs to the VHL family. As to quaternary structure, component of the VCB (VHL-Elongin BC-CUL2) complex; this complex acts as a ubiquitin-ligase E3 and directs proteasome-dependent degradation of targeted proteins. Interacts with CUL2; this interaction is dependent on the integrity of the trimeric VCB complex. Interacts (via the beta domain) with HIF1A (via the NTAD domain); this interaction mediates degradation of HIF1A in normoxia and, in hypoxia, prevents ubiquitination and degradation of HIF1A by mediating hypoxia-induced translocation to the nucleus, a process which requires a hypoxia-dependent regulatory signal. Interacts with ADRB2; the interaction, in normoxia, is dependent on hydroxylation of ADRB2 and the subsequent VCB-mediated ubiquitination and degradation of ADRB2. Under hypoxia, hydroxylation, interaction with VHL, ubiquitination and subsequent degradation of ADRB2 are dramatically decreased. Interacts with RNF139, USP33 and JADE1. Found in a complex composed of LIMD1, VHL, EGLN1/PHD2, ELOB and CUL2. Isoform 1 and isoform 3 interact with LIMD1 (via LIM zinc-binding 2), AJUBA (via LIM domains) and WTIP (via LIM domains). Interacts with EPAS1. Interacts with CARD9. Interacts with DCUN1D1 independently of CUL2; this interaction engages DCUN1D1 in the VCB complex and triggers CUL2 neddylation and consequently cullin ring ligase (CRL) substrates polyubiquitylation. Interacts with ALAS1 (hydroxylated form). Interacts with IGFBP1. In terms of tissue distribution, expressed in the adult and fetal brain and kidney.

It is found in the cytoplasm. The protein localises to the cell membrane. It localises to the endoplasmic reticulum. Its subcellular location is the nucleus. It participates in protein modification; protein ubiquitination. In terms of biological role, involved in the ubiquitination and subsequent proteasomal degradation via the von Hippel-Lindau ubiquitination complex. Seems to act as a target recruitment subunit in the E3 ubiquitin ligase complex and recruits hydroxylated hypoxia-inducible factor (HIF) under normoxic conditions. Involved in transcriptional repression through interaction with HIF1A, HIF1AN and histone deacetylases. Ubiquitinates, in an oxygen-responsive manner, ADRB2. Acts as a negative regulator of mTORC1 by promoting ubiquitination and degradation of RPTOR. The chain is von Hippel-Lindau disease tumor suppressor (VHL) from Homo sapiens (Human).